Consider the following 259-residue polypeptide: Ribosome maturation factor RimP (259 aa).

The segment at 198-259 is disordered; the sequence is SLGLAPEPPP…RGEIDTSEGD (62 aa). A compositionally biased stretch (basic and acidic residues) spans 243 to 253; the sequence is LAADKARRGEI.

It belongs to the RimP family.

The protein resides in the cytoplasm. Required for maturation of 30S ribosomal subunits. The protein is Ribosome maturation factor RimP of Rhodopseudomonas palustris (strain TIE-1).